The sequence spans 441 residues: Dolichyl-diphosphooligosaccharide--protein glycosyltransferase 48 kDa subunit (441 aa).

The signal sequence occupies residues 1 to 28 (MATALSGGFSKNALFILSAALMLQAVLG). Over 29 to 410 (DGKTLVLLDN…TQYERFIPSA (382 aa)) the chain is Lumenal. The chain crosses the membrane as a helical span at residues 411-431 (FPYYASAFSMMAGLFVFSVVF). Residues 432 to 441 (LHMREKEKSD) lie on the Cytoplasmic side of the membrane.

The protein belongs to the DDOST 48 kDa subunit family. In terms of assembly, component of the oligosaccharyltransferase (OST) complex.

The protein localises to the endoplasmic reticulum membrane. Its pathway is protein modification; protein glycosylation. Subunit of the oligosaccharyl transferase (OST) complex that catalyzes the initial transfer of a defined glycan (Glc(3)Man(9)GlcNAc(2) in eukaryotes) from the lipid carrier dolichol-pyrophosphate to an asparagine residue within an Asn-X-Ser/Thr consensus motif in nascent polypeptide chains, the first step in protein N-glycosylation. N-glycosylation occurs cotranslationally and the complex associates with the Sec61 complex at the channel-forming translocon complex that mediates protein translocation across the endoplasmic reticulum (ER). All subunits are required for a maximal enzyme activity. Required for the assembly of both SST3A- and SS3B-containing OST complexes. This Danio rerio (Zebrafish) protein is Dolichyl-diphosphooligosaccharide--protein glycosyltransferase 48 kDa subunit.